A 543-amino-acid polypeptide reads, in one-letter code: Proline--tRNA ligase, chloroplastic/mitochondrial (543 aa).

The disordered stretch occupies residues 41–63 (ATAPSGTASPETKSSEVDRLRSD). Basic and acidic residues predominate over residues 53-63 (KSSEVDRLRSD).

The protein belongs to the class-II aminoacyl-tRNA synthetase family.

It localises to the plastid. The protein resides in the chloroplast. It is found in the mitochondrion. It catalyses the reaction tRNA(Pro) + L-proline + ATP = L-prolyl-tRNA(Pro) + AMP + diphosphate. Its function is as follows. Catalyzes the attachment of proline to tRNA(Pro) in a two-step reaction: proline is first activated by ATP to form Pro-AMP and then transferred to the acceptor end of tRNA(Pro). In Arabidopsis thaliana (Mouse-ear cress), this protein is Proline--tRNA ligase, chloroplastic/mitochondrial.